Here is a 739-residue protein sequence, read N- to C-terminus: Poly(A) polymerase gamma (739 aa).

At Lys2 the chain carries N6-acetyllysine. Position 23 is a phosphoserine (Ser23). Residues Phe99–Ser101, Thr108, Asp112–Asp114, Asp166, Lys227, Tyr236, and Gly245–Val246 each bind ATP. Residues Asp112, Asp114, and Asp166 each contribute to the Mg(2+) site. A disordered region spans residues Lys506–Ala566. Composition is skewed to polar residues over residues Ser509–Asp531 and Ser538–Ser556. Ser524 is subject to Phosphoserine. Phosphoserine occurs at positions 602 and 651. A Phosphothreonine modification is found at Thr657. Residues Ser677–Met688 are compositionally biased toward basic and acidic residues. Positions Ser677–Asn725 are disordered. Phosphoserine is present on Ser711.

It belongs to the poly(A) polymerase family. The cofactor is Mg(2+). It depends on Mn(2+) as a cofactor.

It is found in the nucleus. The enzyme catalyses RNA(n) + ATP = RNA(n)-3'-adenine ribonucleotide + diphosphate. Functionally, responsible for the post-transcriptional adenylation of the 3'-terminal of mRNA precursors and several small RNAs including signal recognition particle (SRP) RNA, nuclear 7SK RNA, U2 small nuclear RNA, and ribosomal 5S RNA. This Mus musculus (Mouse) protein is Poly(A) polymerase gamma (Papolg).